Here is a 631-residue protein sequence, read N- to C-terminus: 1-deoxy-D-xylulose-5-phosphate synthase (631 aa).

Residues H76 and 117 to 119 (AHS) contribute to the thiamine diphosphate site. D148 serves as a coordination point for Mg(2+). Thiamine diphosphate-binding positions include 149-150 (GA), N177, Y284, and E365. Position 177 (N177) interacts with Mg(2+).

This sequence belongs to the transketolase family. DXPS subfamily. As to quaternary structure, homodimer. Requires Mg(2+) as cofactor. Thiamine diphosphate is required as a cofactor.

It carries out the reaction D-glyceraldehyde 3-phosphate + pyruvate + H(+) = 1-deoxy-D-xylulose 5-phosphate + CO2. It functions in the pathway metabolic intermediate biosynthesis; 1-deoxy-D-xylulose 5-phosphate biosynthesis; 1-deoxy-D-xylulose 5-phosphate from D-glyceraldehyde 3-phosphate and pyruvate: step 1/1. Functionally, catalyzes the acyloin condensation reaction between C atoms 2 and 3 of pyruvate and glyceraldehyde 3-phosphate to yield 1-deoxy-D-xylulose-5-phosphate (DXP). The sequence is that of 1-deoxy-D-xylulose-5-phosphate synthase from Methylibium petroleiphilum (strain ATCC BAA-1232 / LMG 22953 / PM1).